A 402-amino-acid chain; its full sequence is Pentalenic acid synthase (402 aa).

The interval 1-28 (MTEPGTSVSAPVAFPQDRTCPYDPPTAY) is disordered. Residue C351 participates in heme binding.

It belongs to the cytochrome P450 family. It depends on heme as a cofactor.

It carries out the reaction 1-deoxypentalenate + reduced 2[4Fe-4S]-[ferredoxin] + O2 + 2 H(+) = pentalenate + oxidized 2[4Fe-4S]-[ferredoxin] + H2O. The protein operates within antibiotic biosynthesis; neopentalenolactone biosynthesis. Its function is as follows. Catalyzes the conversion of 1-deoxypentalenic acid to pentalenic acid in the biosynthesis of neopentalenolactone antibiotic. This chain is Pentalenic acid synthase (cyp28), found in Streptomyces avermitilis (strain ATCC 31267 / DSM 46492 / JCM 5070 / NBRC 14893 / NCIMB 12804 / NRRL 8165 / MA-4680).